Reading from the N-terminus, the 392-residue chain is Telomere-binding protein subunit beta (392 aa).

The tract at residues 234–392 (QQVESVQVQP…ASKASKRSKK (159 aa)) is disordered. Residues 247–256 (GGAKGKKKAA) are compositionally biased toward basic residues. A compositionally biased stretch (low complexity) spans 257 to 268 (TKSATKKTVAAK). Residues 269–284 (KTAESADVRKSVDKIV) are compositionally biased toward basic and acidic residues. Residues 328-343 (SPSGKKSTKTTDQMTM) show a composition bias toward polar residues. Residues 374 to 384 (GKASATSGKAS) are compositionally biased toward low complexity.

As to quaternary structure, heterodimer of an alpha and a beta subunit.

It localises to the nucleus. The protein localises to the chromosome. It is found in the telomere. In terms of biological role, may function as protective capping of the single-stranded telomeric overhang. May also participate in telomere length regulation during DNA replication. The polypeptide is Telomere-binding protein subunit beta (STY43) (Stylonychia mytilus (Ciliate)).